The primary structure comprises 166 residues: CDP-archaeol synthase (166 aa).

Helical transmembrane passes span 7–27 (LLLSILIYLPAFIANGSGPFI), 55–75 (LIVALTFGTTVGVIISKFFTA), 78–98 (TLISFLESLFAMIGDMIGAFI), 116–136 (LDFVLGASLILVLMRVNITWY), and 138–158 (FLFICGLAFFLHQGTNYVAYL).

This sequence belongs to the CDP-archaeol synthase family. Mg(2+) serves as cofactor.

The protein localises to the cell membrane. The enzyme catalyses 2,3-bis-O-(geranylgeranyl)-sn-glycerol 1-phosphate + CTP + H(+) = CDP-2,3-bis-O-(geranylgeranyl)-sn-glycerol + diphosphate. The protein operates within membrane lipid metabolism; glycerophospholipid metabolism. Functionally, catalyzes the formation of CDP-2,3-bis-(O-geranylgeranyl)-sn-glycerol (CDP-archaeol) from 2,3-bis-(O-geranylgeranyl)-sn-glycerol 1-phosphate (DGGGP) and CTP. This reaction is the third ether-bond-formation step in the biosynthesis of archaeal membrane lipids. The chain is CDP-archaeol synthase from Saccharolobus islandicus (strain Y.N.15.51 / Yellowstone #2) (Sulfolobus islandicus).